The primary structure comprises 262 residues: 5-methyltetrahydrofolate:corrinoid/iron-sulfur protein co-methyltransferase (262 aa).

The 246-residue stretch at 1–246 (MLIIGERING…ETAATAEILL (246 aa)) folds into the Pterin-binding domain. (6S)-5-methyl-5,6,7,8-tetrahydrofolate is bound by residues Asn-96 and Asp-160. Lys-184 lines the Ca(2+) pocket. 3 residues coordinate (6S)-5-methyl-5,6,7,8-tetrahydrofolate: Asn-199, Gln-202, and Arg-207. 202-203 (QN) contributes to the methylcob(III)alamin binding site. Ca(2+) is bound by residues Gly-222 and Asp-224.

The protein belongs to the vitamin-B12 dependent methionine synthase family. Heterohexamer composed of 2 subunits of AcsC, 2 subunits of AcsD and 2 subunits of AcsE. It depends on Ca(2+) as a cofactor.

The enzyme catalyses methyl-Co(III)-[corrinoid Fe-S protein] + (6S)-5,6,7,8-tetrahydrofolate = Co(I)-[corrinoid Fe-S protein] + (6S)-5-methyl-5,6,7,8-tetrahydrofolate + H(+). Functionally, methyltransferase that mediates the transfer of a N5-methyl group of (6S)-methyltetrahydrofolate to the 5-methoxybenzimidazolylcobamide cofactor of a corrinoid/Fe-S protein (AcsC/AcsD) in the anaerobic acetyl-CoA pathway (Wood-Ljungdahl pathway) of carbon monoxide and carbon dioxide fixation. This is 5-methyltetrahydrofolate:corrinoid/iron-sulfur protein co-methyltransferase (acsE) from Moorella thermoacetica (Clostridium thermoaceticum).